Reading from the N-terminus, the 209-residue chain is LexA repressor (209 aa).

Positions 32–52 (VREIGKAVDLSSTSTVHGHLA) form a DNA-binding region, H-T-H motif. Catalysis depends on for autocatalytic cleavage activity residues S131 and K169.

This sequence belongs to the peptidase S24 family. Homodimer.

The enzyme catalyses Hydrolysis of Ala-|-Gly bond in repressor LexA.. In terms of biological role, represses a number of genes involved in the response to DNA damage (SOS response), including recA and lexA. In the presence of single-stranded DNA, RecA interacts with LexA causing an autocatalytic cleavage which disrupts the DNA-binding part of LexA, leading to derepression of the SOS regulon and eventually DNA repair. This chain is LexA repressor, found in Enterococcus faecalis (strain ATCC 700802 / V583).